A 982-amino-acid polypeptide reads, in one-letter code: Pentatricopeptide repeat-containing protein At5g62370 (982 aa).

24 PPR repeats span residues 94 to 129 (DSSC…GIVP), 130 to 164 (DSSV…GYAP), 165 to 199 (SRNS…GSGL), 200 to 234 (WLWC…TRMP), 236 to 270 (PVNL…GYYV), 271 to 305 (DKVM…SFEL), 306 to 340 (DPCI…GVQS), 341 to 376 (NVFT…DISR), 377 to 411 (NVHC…GIVP), 412 to 446 (DHIT…GCGI), 476 to 510 (AAVG…GCTP), 511 to 545 (LPFS…DFVP), 546 to 580 (DVDT…GLRP), 581 to 615 (TVAI…GIQP), 616 to 650 (DEIA…FLRP), 651 to 685 (SSFT…GLSP), 686 to 720 (NVVL…DIKH), 721 to 755 (DHIA…KLLQ), 759 to 789 (RTKP…VKKS), 793 to 827 (NLYL…GIVP), 828 to 858 (NLVT…TNCE), 860 to 894 (DQVM…GINP), 895 to 929 (NKDS…DIWP), and 930 to 964 (RSIN…GRSL).

It belongs to the PPR family. P subfamily.

The chain is Pentatricopeptide repeat-containing protein At5g62370 from Arabidopsis thaliana (Mouse-ear cress).